The chain runs to 206 residues: Cytochrome c oxidase assembly protein CtaG (206 aa).

At 1 to 12 (MSKKPAGKNSNR) the chain is on the cytoplasmic side. The helical; Signal-anchor for type II membrane protein transmembrane segment at 13–35 (IVAAVCLAFFTGMIGMAYAAVPL) threads the bilayer. Residues 36-206 (YKMFCQATGY…ISDTEANLGG (171 aa)) lie on the Periplasmic side of the membrane. A disordered region spans residues 184–206 (VASSEPVQGTSKIISDTEANLGG). Over residues 188 to 206 (EPVQGTSKIISDTEANLGG) the composition is skewed to polar residues.

This sequence belongs to the COX11/CtaG family.

Its subcellular location is the cell inner membrane. Exerts its effect at some terminal stage of cytochrome c oxidase synthesis, probably by being involved in the insertion of the copper B into subunit I. This is Cytochrome c oxidase assembly protein CtaG from Mesorhizobium japonicum (strain LMG 29417 / CECT 9101 / MAFF 303099) (Mesorhizobium loti (strain MAFF 303099)).